The following is a 519-amino-acid chain: UvrABC system protein C (519 aa).

The region spanning 9-87 (HLPGCYLFKN…IKKHWPRYNI (79 aa)) is the GIY-YIG domain. A UVR domain is found at 191 to 226 (RELIESMEKDMRELASRQQFEQAMALRDEIAALEYL).

It belongs to the UvrC family. As to quaternary structure, interacts with UvrB in an incision complex.

It localises to the cytoplasm. Functionally, the UvrABC repair system catalyzes the recognition and processing of DNA lesions. UvrC both incises the 5' and 3' sides of the lesion. The N-terminal half is responsible for the 3' incision and the C-terminal half is responsible for the 5' incision. In Methanosarcina barkeri (strain Fusaro / DSM 804), this protein is UvrABC system protein C.